A 223-amino-acid chain; its full sequence is Endonuclease V (223 aa).

Aspartate 44 and aspartate 109 together coordinate Mg(2+).

Belongs to the endonuclease V family. It depends on Mg(2+) as a cofactor.

It localises to the cytoplasm. The catalysed reaction is Endonucleolytic cleavage at apurinic or apyrimidinic sites to products with a 5'-phosphate.. DNA repair enzyme involved in the repair of deaminated bases. Selectively cleaves double-stranded DNA at the second phosphodiester bond 3' to a deoxyinosine leaving behind the intact lesion on the nicked DNA. In Methanothrix thermoacetophila (strain DSM 6194 / JCM 14653 / NBRC 101360 / PT) (Methanosaeta thermophila), this protein is Endonuclease V.